A 238-amino-acid polypeptide reads, in one-letter code: Small ribosomal subunit protein eS4 (238 aa).

An S4 RNA-binding domain is found at 38–100 (LPLAIVIRDV…TGEVYRVVPD (63 aa)).

This sequence belongs to the eukaryotic ribosomal protein eS4 family.

This is Small ribosomal subunit protein eS4 from Pyrobaculum arsenaticum (strain DSM 13514 / JCM 11321 / PZ6).